Consider the following 273-residue polypeptide: Pantothenate synthetase (273 aa).

27–34 serves as a coordination point for ATP; the sequence is MGALHDGH. Residue histidine 34 is the Proton donor of the active site. Residue glutamine 58 coordinates (R)-pantoate. Glutamine 58 serves as a coordination point for beta-alanine. 144 to 147 contacts ATP; the sequence is GKKD. Residue glutamine 150 participates in (R)-pantoate binding. Residues valine 173 and 181 to 184 each bind ATP; that span reads LSSR.

Belongs to the pantothenate synthetase family. As to quaternary structure, homodimer.

The protein resides in the cytoplasm. The enzyme catalyses (R)-pantoate + beta-alanine + ATP = (R)-pantothenate + AMP + diphosphate + H(+). The protein operates within cofactor biosynthesis; (R)-pantothenate biosynthesis; (R)-pantothenate from (R)-pantoate and beta-alanine: step 1/1. Catalyzes the condensation of pantoate with beta-alanine in an ATP-dependent reaction via a pantoyl-adenylate intermediate. In Campylobacter concisus (strain 13826), this protein is Pantothenate synthetase.